The following is a 150-amino-acid chain: D-aminoacyl-tRNA deacylase (150 aa).

A Gly-cisPro motif, important for rejection of L-amino acids motif is present at residues 136–137 (GP).

This sequence belongs to the DTD family. As to quaternary structure, homodimer.

It is found in the cytoplasm. It catalyses the reaction glycyl-tRNA(Ala) + H2O = tRNA(Ala) + glycine + H(+). The catalysed reaction is a D-aminoacyl-tRNA + H2O = a tRNA + a D-alpha-amino acid + H(+). Functionally, an aminoacyl-tRNA editing enzyme that deacylates mischarged D-aminoacyl-tRNAs. Also deacylates mischarged glycyl-tRNA(Ala), protecting cells against glycine mischarging by AlaRS. Acts via tRNA-based rather than protein-based catalysis; rejects L-amino acids rather than detecting D-amino acids in the active site. By recycling D-aminoacyl-tRNA to D-amino acids and free tRNA molecules, this enzyme counteracts the toxicity associated with the formation of D-aminoacyl-tRNA entities in vivo and helps enforce protein L-homochirality. In Staphylococcus haemolyticus (strain JCSC1435), this protein is D-aminoacyl-tRNA deacylase.